Consider the following 196-residue polypeptide: Pyridoxal 5'-phosphate synthase subunit PdxT (196 aa).

47 to 49 (GES) provides a ligand contact to L-glutamine. The active-site Nucleophile is the Cys79. Residues Arg106 and 134 to 135 (IR) contribute to the L-glutamine site. Active-site charge relay system residues include His170 and Glu172.

The protein belongs to the glutaminase PdxT/SNO family. In the presence of PdxS, forms a dodecamer of heterodimers. Only shows activity in the heterodimer.

The enzyme catalyses aldehydo-D-ribose 5-phosphate + D-glyceraldehyde 3-phosphate + L-glutamine = pyridoxal 5'-phosphate + L-glutamate + phosphate + 3 H2O + H(+). It catalyses the reaction L-glutamine + H2O = L-glutamate + NH4(+). It functions in the pathway cofactor biosynthesis; pyridoxal 5'-phosphate biosynthesis. In terms of biological role, catalyzes the hydrolysis of glutamine to glutamate and ammonia as part of the biosynthesis of pyridoxal 5'-phosphate. The resulting ammonia molecule is channeled to the active site of PdxS. The chain is Pyridoxal 5'-phosphate synthase subunit PdxT from Bacillus thuringiensis subsp. konkukian (strain 97-27).